We begin with the raw amino-acid sequence, 188 residues long: Elongation factor P (188 aa).

It belongs to the elongation factor P family.

The protein resides in the cytoplasm. Its pathway is protein biosynthesis; polypeptide chain elongation. Functionally, involved in peptide bond synthesis. Stimulates efficient translation and peptide-bond synthesis on native or reconstituted 70S ribosomes in vitro. Probably functions indirectly by altering the affinity of the ribosome for aminoacyl-tRNA, thus increasing their reactivity as acceptors for peptidyl transferase. This chain is Elongation factor P, found in Rickettsia akari (strain Hartford).